A 1213-amino-acid chain; its full sequence is DNA-directed RNA polymerase subunit beta' (1213 aa).

The Zn(2+) site is built by Cys-60, Cys-62, Cys-75, and Cys-78. Residues Asp-450, Asp-452, and Asp-454 each coordinate Mg(2+). The Zn(2+) site is built by Cys-819, Cys-893, Cys-900, and Cys-903.

The protein belongs to the RNA polymerase beta' chain family. The RNAP catalytic core consists of 2 alpha, 1 beta, 1 beta' and 1 omega subunit. When a sigma factor is associated with the core the holoenzyme is formed, which can initiate transcription. The cofactor is Mg(2+). Zn(2+) serves as cofactor.

The catalysed reaction is RNA(n) + a ribonucleoside 5'-triphosphate = RNA(n+1) + diphosphate. Functionally, DNA-dependent RNA polymerase catalyzes the transcription of DNA into RNA using the four ribonucleoside triphosphates as substrates. This Streptococcus pyogenes serotype M1 protein is DNA-directed RNA polymerase subunit beta'.